The sequence spans 317 residues: Ventral anterior homeobox 1 (317 aa).

Positions 1 to 62 are disordered; it reads MEVRYSQDSE…CEKSRASSGD (62 aa). A compositionally biased stretch (basic and acidic residues) spans 18 to 27; that stretch reads GLKEGKEGKD. The homeobox DNA-binding region spans 92 to 151; the sequence is PKRTRTSFTAEQLYRLEMEFQRCQYVVGRERTELARQLNLSETQVKVWFQNRRTKQKKDQ. The segment at 203–248 is disordered; sequence GPSLGITANGGSSSSSRSSAGSSGTAGGSPPLPTVTSSGTVTGLQG. The span at 212–225 shows a compositional bias: low complexity; sequence GGSSSSSRSSAGSS. The segment covering 236 to 247 has biased composition (polar residues); sequence TVTSSGTVTGLQ.

The protein belongs to the EMX homeobox family. As to expression, expressed in the anterior neural keel and later in the preoptic area and optic stalk.

It localises to the nucleus. Transcription factor that is required for closure of the choroid fissure and together with Vax2 is required for optic nerve differentiation and to limit retinal development to the optic cup. This chain is Ventral anterior homeobox 1 (vax1), found in Danio rerio (Zebrafish).